The following is an 823-amino-acid chain: Protein phosphatase 1 regulatory subunit 29 (823 aa).

Residues 1–22 (MLRLGLCAAALLCVCQPGAVRA) form the signal peptide. The Extracellular segment spans residues 23 to 397 (DCWLIEGDKG…APSTSTTTHY (375 aa)). Asn54 carries N-linked (GlcNAc...) asparagine glycosylation. 5 LRR repeats span residues 56–77 (TVHD…SLNR), 80–101 (NLTD…AFLG), 104–125 (SLQV…MLRG), 128–149 (RLQF…AFSE), and 152–173 (SLIS…TFAS). 3 N-linked (GlcNAc...) asparagine glycosylation sites follow: Asn80, Asn85, and Asn117. One can recognise an LRRCT domain in the interval 185–247 (NPFNCECDLF…ITVLQAKCRN (63 aa)). Asn205 and Asn247 each carry an N-linked (GlcNAc...) asparagine glycan. The interval 249 to 294 (SMPARPVSHPTPYSTDAQREPDENSGFNPDEILSVEPPASSTTDAS) is disordered. In terms of domain architecture, Fibronectin type-III spans 292–379 (DASAGPAIKL…FNHTCLTFTT (88 aa)). A helical transmembrane segment spans residues 398–418 (IMTILGCLFGMVIVLGAVYYC). Residues 419 to 823 (LRKRRMQEEK…WKGVSAQQKL (405 aa)) are Cytoplasmic-facing. The interval 590 to 624 (ASSAATPGALERPSFLSPPYKESSHHPLQRQLSAD) is disordered. Residues Ser622, Ser671, and Ser675 each carry the phosphoserine modification.

As to quaternary structure, interacts with PPP1CA.

The protein localises to the membrane. Inhibits phosphatase activity of protein phosphatase 1 (PP1) complexes. This is Protein phosphatase 1 regulatory subunit 29 (Elfn2) from Mus musculus (Mouse).